Reading from the N-terminus, the 145-residue chain is Alpha-amylase/trypsin inhibitor CMa (145 aa).

A signal peptide spans 1-25 (MASKSSITPLLLAAVLASVFAAATA).

The protein belongs to the protease inhibitor I6 (cereal trypsin/alpha-amylase inhibitor) family. Heterotetramer of one CMa, one CMb and two CMd chains. Post-translationally, five disulfide bonds, which are essential for the inhibitor activity, are probably present. In terms of tissue distribution, endosperm.

It localises to the secreted. In terms of biological role, alpha-amylase/trypsin inhibitor. It could be involved in insect defense mechanisms. This is Alpha-amylase/trypsin inhibitor CMa (IAT1) from Hordeum vulgare (Barley).